Consider the following 369-residue polypeptide: 4-hydroxy-3-methylbut-2-en-1-yl diphosphate synthase (flavodoxin) (369 aa).

Residues Cys-270, Cys-273, Cys-305, and Glu-312 each contribute to the [4Fe-4S] cluster site.

It belongs to the IspG family. [4Fe-4S] cluster is required as a cofactor.

It catalyses the reaction (2E)-4-hydroxy-3-methylbut-2-enyl diphosphate + oxidized [flavodoxin] + H2O + 2 H(+) = 2-C-methyl-D-erythritol 2,4-cyclic diphosphate + reduced [flavodoxin]. The protein operates within isoprenoid biosynthesis; isopentenyl diphosphate biosynthesis via DXP pathway; isopentenyl diphosphate from 1-deoxy-D-xylulose 5-phosphate: step 5/6. Functionally, converts 2C-methyl-D-erythritol 2,4-cyclodiphosphate (ME-2,4cPP) into 1-hydroxy-2-methyl-2-(E)-butenyl 4-diphosphate. This Pseudomonas putida (strain GB-1) protein is 4-hydroxy-3-methylbut-2-en-1-yl diphosphate synthase (flavodoxin).